The primary structure comprises 508 residues: Light-independent protochlorophyllide reductase subunit B (508 aa).

Asp36 lines the [4Fe-4S] cluster pocket. The active-site Proton donor is Asp294. Position 429–430 (429–430 (GM)) interacts with substrate.

Belongs to the ChlB/BchB/BchZ family. Protochlorophyllide reductase is composed of three subunits; ChlL, ChlN and ChlB. Forms a heterotetramer of two ChlB and two ChlN subunits. [4Fe-4S] cluster serves as cofactor.

The catalysed reaction is chlorophyllide a + oxidized 2[4Fe-4S]-[ferredoxin] + 2 ADP + 2 phosphate = protochlorophyllide a + reduced 2[4Fe-4S]-[ferredoxin] + 2 ATP + 2 H2O. It participates in porphyrin-containing compound metabolism; chlorophyll biosynthesis (light-independent). Functionally, component of the dark-operative protochlorophyllide reductase (DPOR) that uses Mg-ATP and reduced ferredoxin to reduce ring D of protochlorophyllide (Pchlide) to form chlorophyllide a (Chlide). This reaction is light-independent. The NB-protein (ChlN-ChlB) is the catalytic component of the complex. In Crocosphaera subtropica (strain ATCC 51142 / BH68) (Cyanothece sp. (strain ATCC 51142)), this protein is Light-independent protochlorophyllide reductase subunit B.